Reading from the N-terminus, the 256-residue chain is Hydroxyethylthiazole kinase (256 aa).

Methionine 38 is a binding site for substrate. ATP is bound by residues arginine 114 and threonine 159. Glycine 186 serves as a coordination point for substrate.

It belongs to the Thz kinase family. It depends on Mg(2+) as a cofactor.

It carries out the reaction 5-(2-hydroxyethyl)-4-methylthiazole + ATP = 4-methyl-5-(2-phosphooxyethyl)-thiazole + ADP + H(+). The protein operates within cofactor biosynthesis; thiamine diphosphate biosynthesis; 4-methyl-5-(2-phosphoethyl)-thiazole from 5-(2-hydroxyethyl)-4-methylthiazole: step 1/1. Its function is as follows. Catalyzes the phosphorylation of the hydroxyl group of 4-methyl-5-beta-hydroxyethylthiazole (THZ). The sequence is that of Hydroxyethylthiazole kinase from Streptococcus agalactiae serotype III (strain NEM316).